The following is a 94-amino-acid chain: Co-chaperonin GroES (94 aa).

This sequence belongs to the GroES chaperonin family. As to quaternary structure, heptamer of 7 subunits arranged in a ring. Interacts with the chaperonin GroEL.

Its subcellular location is the cytoplasm. Its function is as follows. Together with the chaperonin GroEL, plays an essential role in assisting protein folding. The GroEL-GroES system forms a nano-cage that allows encapsulation of the non-native substrate proteins and provides a physical environment optimized to promote and accelerate protein folding. GroES binds to the apical surface of the GroEL ring, thereby capping the opening of the GroEL channel. This Listeria welshimeri serovar 6b (strain ATCC 35897 / DSM 20650 / CCUG 15529 / CIP 8149 / NCTC 11857 / SLCC 5334 / V8) protein is Co-chaperonin GroES.